The chain runs to 1095 residues: Formin-like protein 2 (1095 aa).

In terms of domain architecture, GBD/FH3 spans Leu-23 to Glu-469. Residues Leu-381–Gln-478 are a coiled coil. The segment at Pro-521 to Ser-602 is disordered. 3 stretches are compositionally biased toward pro residues: residues Gly-524 to Pro-534, Ala-548 to Gly-576, and Pro-583 to Pro-599. The 392-residue stretch at Ile-617–Ala-1008 folds into the FH2 domain.

It belongs to the formin homology family. As to quaternary structure, interacts with TCP11L2; this interaction promotes muscle-derived satellite cell (MDSC) migration and differentiation.

It is found in the cytoplasm. In terms of biological role, plays a role in the regulation of cell morphology and cytoskeletal organization. Required in the cortical actin filament dynamics. The polypeptide is Formin-like protein 2 (Bos taurus (Bovine)).